Consider the following 420-residue polypeptide: Probable endo-beta-1,4-glucanase celB (420 aa).

An N-terminal signal peptide occupies residues 1 to 18; sequence MLRKLTPLALALLPLVAG. The N-linked (GlcNAc...) asparagine glycan is linked to N118. E215 (nucleophile) is an active-site residue. E220 serves as the catalytic Proton donor. 3 N-linked (GlcNAc...) asparagine glycosylation sites follow: N234, N293, and N383.

Belongs to the glycosyl hydrolase 7 (cellulase C) family.

Its subcellular location is the secreted. The catalysed reaction is Endohydrolysis of (1-&gt;4)-beta-D-glucosidic linkages in cellulose, lichenin and cereal beta-D-glucans.. Its function is as follows. Has endoglucanase activity on substrates containing beta-1,4 glycosidic bonds, like in carboxymethylcellulose (CMC), hydroxyethylcellulose (HEC) and beta-glucan. Involved in the degradation of complex natural cellulosic substrates. In Aspergillus terreus (strain NIH 2624 / FGSC A1156), this protein is Probable endo-beta-1,4-glucanase celB (celB).